Reading from the N-terminus, the 417-residue chain is Serine hydroxymethyltransferase (417 aa).

Residues leucine 112 and 116-118 each bind (6S)-5,6,7,8-tetrahydrofolate; that span reads GHL. An N6-(pyridoxal phosphate)lysine modification is found at lysine 221. Glutamate 247 is a binding site for (6S)-5,6,7,8-tetrahydrofolate.

The protein belongs to the SHMT family. In terms of assembly, homodimer. Pyridoxal 5'-phosphate serves as cofactor.

The protein localises to the cytoplasm. It catalyses the reaction (6R)-5,10-methylene-5,6,7,8-tetrahydrofolate + glycine + H2O = (6S)-5,6,7,8-tetrahydrofolate + L-serine. It participates in one-carbon metabolism; tetrahydrofolate interconversion. Its pathway is amino-acid biosynthesis; glycine biosynthesis; glycine from L-serine: step 1/1. In terms of biological role, catalyzes the reversible interconversion of serine and glycine with tetrahydrofolate (THF) serving as the one-carbon carrier. This reaction serves as the major source of one-carbon groups required for the biosynthesis of purines, thymidylate, methionine, and other important biomolecules. Also exhibits THF-independent aldolase activity toward beta-hydroxyamino acids, producing glycine and aldehydes, via a retro-aldol mechanism. This is Serine hydroxymethyltransferase from Borrelia duttonii (strain Ly).